Consider the following 185-residue polypeptide: Ribosome-recycling factor (185 aa).

This sequence belongs to the RRF family.

It localises to the cytoplasm. In terms of biological role, responsible for the release of ribosomes from messenger RNA at the termination of protein biosynthesis. May increase the efficiency of translation by recycling ribosomes from one round of translation to another. This chain is Ribosome-recycling factor, found in Yersinia pseudotuberculosis serotype O:1b (strain IP 31758).